Here is a 338-residue protein sequence, read N- to C-terminus: Ketol-acid reductoisomerase (NADP(+)) (338 aa).

Positions 1-181 (MKVFYDKDCD…GGGKAGIIET (181 aa)) constitute a KARI N-terminal Rossmann domain. NADP(+) is bound by residues 24-27 (YGSQ), R47, and S52. H107 is an active-site residue. An NADP(+)-binding site is contributed by G133. Residues 182–327 (TFREETETDL…EKLRAMMPWI (146 aa)) enclose the KARI C-terminal knotted domain. Mg(2+)-binding residues include D190, E194, E226, and E230. S251 serves as a coordination point for substrate.

It belongs to the ketol-acid reductoisomerase family. Requires Mg(2+) as cofactor.

It carries out the reaction (2R)-2,3-dihydroxy-3-methylbutanoate + NADP(+) = (2S)-2-acetolactate + NADPH + H(+). The enzyme catalyses (2R,3R)-2,3-dihydroxy-3-methylpentanoate + NADP(+) = (S)-2-ethyl-2-hydroxy-3-oxobutanoate + NADPH + H(+). The protein operates within amino-acid biosynthesis; L-isoleucine biosynthesis; L-isoleucine from 2-oxobutanoate: step 2/4. It functions in the pathway amino-acid biosynthesis; L-valine biosynthesis; L-valine from pyruvate: step 2/4. Functionally, involved in the biosynthesis of branched-chain amino acids (BCAA). Catalyzes an alkyl-migration followed by a ketol-acid reduction of (S)-2-acetolactate (S2AL) to yield (R)-2,3-dihydroxy-isovalerate. In the isomerase reaction, S2AL is rearranged via a Mg-dependent methyl migration to produce 3-hydroxy-3-methyl-2-ketobutyrate (HMKB). In the reductase reaction, this 2-ketoacid undergoes a metal-dependent reduction by NADPH to yield (R)-2,3-dihydroxy-isovalerate. This is Ketol-acid reductoisomerase (NADP(+)) from Albidiferax ferrireducens (strain ATCC BAA-621 / DSM 15236 / T118) (Rhodoferax ferrireducens).